We begin with the raw amino-acid sequence, 352 residues long: MSKQPSISYKDAGVDIDAGEALVERIKGVAKRTARPEVMGGLGGFGALCEIPAGYKQPVLVSGTDGVGTKLRLALNLNKHDSIGQDLVAMCVNDLVVCGAEPLFFLDYYATGKLNVDVAATVVTGIGAGCELAGCSLVGGETAEMPGMYEGEDYDLAGFCVGVVEKSEIIDGSKVATGDALIALPSSGPHSNGYSLIRKIIEVSGADIEQVQLDGKALADLLMAPTRIYVKPLLKLIKDTGAVKAMAHITGGGLLDNIPRVLPQGAQAVIDVASWNRPAVFDWLQEKGNVDEHEMHRVLNCGVGMVICVAQDQVEAALASLRASGESPWVIGQIAEAAEGAAQVQLNNLKTH.

The protein belongs to the AIR synthase family.

The protein resides in the cytoplasm. It catalyses the reaction 2-formamido-N(1)-(5-O-phospho-beta-D-ribosyl)acetamidine + ATP = 5-amino-1-(5-phospho-beta-D-ribosyl)imidazole + ADP + phosphate + H(+). It functions in the pathway purine metabolism; IMP biosynthesis via de novo pathway; 5-amino-1-(5-phospho-D-ribosyl)imidazole from N(2)-formyl-N(1)-(5-phospho-D-ribosyl)glycinamide: step 2/2. This is Phosphoribosylformylglycinamidine cyclo-ligase from Ectopseudomonas mendocina (strain ymp) (Pseudomonas mendocina).